The following is an 885-amino-acid chain: Protein arg11, mitochondrial (885 aa).

The N-terminal 59 residues, 1–59, are a transit peptide targeting the mitochondrion; it reads MLIELQQIVKSGLVRNGAKHCTKRSLLCSNASVIASKRFQGSFAPGQQQPLNPLAKPIE. In terms of domain architecture, N-acetyltransferase spans 346–499; the sequence is FVINKHDSLD…SDKPFADAII (154 aa). The segment covering 503 to 523 has biased composition (low complexity); that stretch reads STKPPTASSTTNNPSSSQINQ. Positions 503–532 are disordered; it reads STKPPTASSTTNNPSSSQINQKRSYSTSSL. Residue Cys-703 is part of the active site.

The protein in the N-terminal section; belongs to the acetylglutamate kinase family. It in the C-terminal section; belongs to the NAGSA dehydrogenase family. In terms of processing, the protein precursor is probably cleaved into the two biologically active enzymes, the kinase and the reductase.

Its subcellular location is the mitochondrion. The enzyme catalyses N-acetyl-L-glutamate 5-semialdehyde + phosphate + NADP(+) = N-acetyl-L-glutamyl 5-phosphate + NADPH + H(+). The catalysed reaction is N-acetyl-L-glutamate + ATP = N-acetyl-L-glutamyl 5-phosphate + ADP. The protein operates within amino-acid biosynthesis; L-arginine biosynthesis; N(2)-acetyl-L-ornithine from L-glutamate: step 2/4. It participates in amino-acid biosynthesis; L-arginine biosynthesis; N(2)-acetyl-L-ornithine from L-glutamate: step 3/4. Its activity is regulated as follows. The kinase activity is inhibited by arginine. The sequence is that of Protein arg11, mitochondrial (arg11) from Schizosaccharomyces pombe (strain 972 / ATCC 24843) (Fission yeast).